A 616-amino-acid polypeptide reads, in one-letter code: Formin-binding protein 1 (616 aa).

A required for self-association and induction of membrane tubulation region spans residues 1-79; it reads MSWGTELWDQ…CKAFLSTLNE (79 aa). The 264-residue stretch at 1-264 folds into the F-BAR domain; the sequence is MSWGTELWDQ…AAESIDQKND (264 aa). Residues 1–334 form an interaction with microtubules region; the sequence is MSWGTELWDQ…KKNKLMSLLT (334 aa). N6-acetyllysine is present on residues Lys-66 and Lys-110. The stretch at 67 to 259 forms a coiled coil; that stretch reads YTACKAFLST…DGIVKAAESI (193 aa). Residues 251–616 form a required for self-association and induction of membrane tubulation region; the sequence is GIVKAAESID…VYLDKNAKGS (366 aa). Disordered regions lie at residues 280 to 314 and 332 to 366; these read GDIE…RFGG and LLTS…KEPL. Residues Ser-296 and Ser-299 each carry the phosphoserine modification. A compositionally biased stretch (pro residues) spans 337–346; it reads HQPPPPPPAS. A phosphoserine mark is found at Ser-348 and Ser-358. Residues 398–490 are a coiled coil; sequence PEDFSNFPPE…VEGRLPARSE (93 aa). The tract at residues 399–551 is interaction with RND2; the sequence is EDFSNFPPEQ…FDDEEPLPAI (153 aa). An REM-1 domain is found at 403-480; sequence NFPPEQRRKK…AQKFEAWLAE (78 aa). The tract at residues 487 to 531 is disordered; sequence ARSEQARRQSGLYDGQTHQTVTNCAQDRESPDGSYTEEQSQESEH. Residues 494–616 are interaction with PDE6G; that stretch reads RQSGLYDGQT…VYLDKNAKGS (123 aa). Ser-496 carries the post-translational modification Phosphoserine. The residue at position 499 (Tyr-499) is a Phosphotyrosine. Residues 502–511 are compositionally biased toward polar residues; the sequence is QTHQTVTNCA. Residues 513-616 are required for interaction with TNKS; the sequence is DRESPDGSYT…VYLDKNAKGS (104 aa). Ser-520 carries the phosphoserine modification. The tract at residues 534–616 is interaction with DNM1 and DNM3; sequence LAPDFDDEFD…VYLDKNAKGS (83 aa). The region spanning 549 to 610 is the SH3 domain; the sequence is PAIGTCKALY…PTSYVEVYLD (62 aa). An interaction with ARHGAP17, DAAM1, DIAPH1 and DIAPH2 region spans residues 549–616; it reads PAIGTCKALY…VYLDKNAKGS (68 aa). The interval 552 to 608 is interaction with DNM2 and WASL; that stretch reads GTCKALYTFEGQNEGTISVVEGETLSVIEEDKGDGWTRIRRNEDEEGYVPTSYVEVY. Positions 552 to 609 are interaction with FASLG; the sequence is GTCKALYTFEGQNEGTISVVEGETLSVIEEDKGDGWTRIRRNEDEEGYVPTSYVEVYL.

The protein belongs to the FNBP1 family. In terms of assembly, homodimerizes, the dimers can polymerize end-to-end to form filamentous structures. Interacts specifically with GTP-bound RND2 and CDC42. Interacts with AKAP9, ARHGAP17, DAAM1, DIAPH1, DIAPH2, DNM1, DNM2, DNM3, FASLG/FASL, microtubules, PDE6G, SNX2 and WASL/N-WASP. May interact with TNKS. In terms of tissue distribution, expressed in brain and testis.

Its subcellular location is the cytoplasm. The protein localises to the cytoskeleton. The protein resides in the cell cortex. It is found in the lysosome. It localises to the cytoplasmic vesicle. Its subcellular location is the cell membrane. The protein localises to the membrane. The protein resides in the clathrin-coated pit. Functionally, required to coordinate membrane tubulation with reorganization of the actin cytoskeleton during the late stage of clathrin-mediated endocytosis. Binds to lipids such as phosphatidylinositol 4,5-bisphosphate and phosphatidylserine and promotes membrane invagination and the formation of tubules. Also enhances actin polymerization via the recruitment of WASL/N-WASP, which in turn activates the Arp2/3 complex. Actin polymerization may promote the fission of membrane tubules to form endocytic vesicles. May act as a link between RND2 signaling and regulation of the actin cytoskeleton. May be required for the lysosomal retention of FASLG/FASL. This Mus musculus (Mouse) protein is Formin-binding protein 1 (Fnbp1).